Here is a 54-residue protein sequence, read N- to C-terminus: MGKYKPPAERKYGKGVQSCQRCGSKDSVIQKYGIYLCRQCFREVAYELGFRKYW.

Residues Cys19, Cys22, Cys37, and Cys40 each contribute to the Zn(2+) site.

It belongs to the universal ribosomal protein uS14 family. Zinc-binding uS14 subfamily. Part of the 30S ribosomal subunit. The cofactor is Zn(2+).

Binds 16S rRNA, required for the assembly of 30S particles. The sequence is that of Small ribosomal subunit protein uS14 from Saccharolobus solfataricus (strain ATCC 35092 / DSM 1617 / JCM 11322 / P2) (Sulfolobus solfataricus).